A 98-amino-acid polypeptide reads, in one-letter code: Hainantoxin-XVII (98 aa).

A signal peptide spans 1-40; sequence MTTVGVSLFRRSPEKITMKIATFLGLSFLLIASYVLICEA. The propeptide occupies 41-64; sequence QHPGFQELLILEENMRDPENSKER. Intrachain disulfides connect cysteine 66-cysteine 81, cysteine 73-cysteine 85, and cysteine 80-cysteine 95.

Belongs to the hainantoxin family. 17 subfamily. Expressed by the venom gland.

Its subcellular location is the secreted. Putative ion channel inhibitor. The sequence is that of Hainantoxin-XVII from Cyriopagopus hainanus (Chinese bird spider).